The sequence spans 289 residues: Tumor necrosis factor receptor superfamily member 5 (289 aa).

Positions 1-19 are cleaved as a signal peptide; that stretch reads MVSLPRLCALWGCLLTAVH. Topologically, residues 20–193 are extracellular; the sequence is LGQCVTCSDK…VICGLKSRMR (174 aa). 4 TNFR-Cys repeats span residues 25–60, 61–103, 104–144, and 145–187; these read TCSDKQYLHDGQCCDLCQPGSRLTSHCTALEKTQCH, PCDS…DTVC, TCKE…TVCH, and PCPV…VICG. 8 disulfides stabilise this stretch: C26/C37, C38/C51, C41/C59, C62/C77, C83/C103, C105/C119, C111/C116, and C125/C143. N153 is a glycosylation site (N-linked (GlcNAc...) asparagine). The helical transmembrane segment at 194–215 threads the bilayer; that stretch reads ALLVIPVVMGILITIFGVFLYI. The Cytoplasmic portion of the chain corresponds to 216–289; it reads KKVVKKPKDN…TDSIALRPLV (74 aa). Positions 228 to 251 are disordered; sequence LPPAARRQDPQEMEDYPGHNTAAP.

In terms of assembly, monomer and homodimer. Interacts with TRAF1, TRAF2 and TRAF6. Interacts with TRAF3 and TRAF5. Interacts with TRAF6 and MAP3K8; the interaction is required for ERK activation.

It is found in the cell membrane. Its subcellular location is the secreted. Its function is as follows. Receptor for TNFSF5/CD40LG. Transduces TRAF6- and MAP3K8-mediated signals that activate ERK in macrophages and B cells, leading to induction of immunoglobulin secretion. This Mus musculus (Mouse) protein is Tumor necrosis factor receptor superfamily member 5 (Cd40).